We begin with the raw amino-acid sequence, 251 residues long: Cell division protein ZapD (251 aa).

This sequence belongs to the ZapD family. In terms of assembly, interacts with FtsZ.

The protein resides in the cytoplasm. Cell division factor that enhances FtsZ-ring assembly. Directly interacts with FtsZ and promotes bundling of FtsZ protofilaments, with a reduction in FtsZ GTPase activity. The chain is Cell division protein ZapD from Burkholderia orbicola (strain MC0-3).